Here is a 354-residue protein sequence, read N- to C-terminus: Probable calcium-binding protein CML50 (354 aa).

2 stretches are compositionally biased toward low complexity: residues 1 to 10 (MSGYPPTSQG) and 28 to 71 (YSSG…SSYG). The tract at residues 1 to 159 (MSGYPPTSQG…PASSGHGGGY (159 aa)) is disordered. Pro residues predominate over residues 72–81 (APPPSAPYAP). Residues 106–117 (GSSDYGSYGAGP) show a composition bias toward low complexity. 2 consecutive EF-hand domains span residues 183–218 (GTDP…YQQR) and 249–284 (YSLQ…LGFS). Residues D196, D198, S200, E207, D262, D264, S266, R268, and E273 each coordinate Ca(2+).

Potential calcium sensor. The protein is Probable calcium-binding protein CML50 (CML50) of Arabidopsis thaliana (Mouse-ear cress).